A 35-amino-acid chain; its full sequence is Photosystem II reaction center protein M (35 aa).

An N-formylmethionine modification is found at Met-1. The chain crosses the membrane as a helical span at residues 7 to 28 (GFIASILFVLVPTVFLLILFIQ).

This sequence belongs to the PsbM family. PSII is composed of 1 copy each of membrane proteins PsbA, PsbB, PsbC, PsbD, PsbE, PsbF, PsbH, PsbI, PsbJ, PsbK, PsbL, PsbM, PsbT, PsbX, PsbY, PsbZ, Psb30/Ycf12, peripheral proteins PsbO, CyanoQ (PsbQ), PsbU, PsbV and a large number of cofactors. It forms dimeric complexes.

The protein resides in the cellular thylakoid membrane. In terms of biological role, one of the components of the core complex of photosystem II (PSII). PSII is a light-driven water:plastoquinone oxidoreductase that uses light energy to abstract electrons from H(2)O, generating O(2) and a proton gradient subsequently used for ATP formation. It consists of a core antenna complex that captures photons, and an electron transfer chain that converts photonic excitation into a charge separation. This subunit is found at the monomer-monomer interface. Involved in assembly of monomeric PSII from the CP43-less intermediate. In Synechocystis sp. (strain ATCC 27184 / PCC 6803 / Kazusa), this protein is Photosystem II reaction center protein M.